Consider the following 357-residue polypeptide: Golgi to ER traffic protein 2 (357 aa).

Topologically, residues 1–224 are cytoplasmic; sequence MSETTDKQLT…AKYHTYQEQL (224 aa). Residues 65–81 are compositionally biased toward low complexity; sequence TDTATVTDSSTNATSVS. A disordered region spans residues 65–99; the sequence is TDTATVTDSSTNATSVSPSAAKATPTSTGVSSAIS. Polar residues predominate over residues 88–98; sequence TPTSTGVSSAI. Residues 225–245 form a helical membrane-spanning segment; that stretch reads WQFRFLVVRILATIFNFAYHF. The Lumenal segment spans residues 246-270; the sequence is ITIPSFTASNHAYVRDLSEVYPLLG. A helical transmembrane segment spans residues 271-290; sequence FMTIFTSIEVVIIATYYLLF. Residues 291–334 are Cytoplasmic-facing; it reads TKLGLFHASNQKSFILKGISTLSMFVPQLLRYEPLVATFLGYKE. Residues 335–355 form a helical membrane-spanning segment; the sequence is LLGIFVGDLSLVVVMFGLLSF. The Lumenal portion of the chain corresponds to 356 to 357; the sequence is SN.

It belongs to the GET2 family. In terms of assembly, component of the Golgi to ER traffic (GET) complex, which is composed of GET1, GET2 and GET3. Within the complex, GET1 and GET2 form a heterotetramer which is stabilized by phosphatidylinositol binding and which binds to the GET3 homodimer.

It is found in the endoplasmic reticulum membrane. It localises to the golgi apparatus membrane. In terms of biological role, required for the post-translational delivery of tail-anchored (TA) proteins to the endoplasmic reticulum. Together with GET1, acts as a membrane receptor for soluble GET3, which recognizes and selectively binds the transmembrane domain of TA proteins in the cytosol. The GET complex cooperates with the HDEL receptor ERD2 to mediate the ATP-dependent retrieval of resident ER proteins that contain a C-terminal H-D-E-L retention signal from the Golgi to the ER. The polypeptide is Golgi to ER traffic protein 2 (Lodderomyces elongisporus (strain ATCC 11503 / CBS 2605 / JCM 1781 / NBRC 1676 / NRRL YB-4239) (Yeast)).